The primary structure comprises 255 residues: Protein PH0439 (255 aa).

It belongs to the CinA family.

The protein is Protein PH0439 of Pyrococcus horikoshii (strain ATCC 700860 / DSM 12428 / JCM 9974 / NBRC 100139 / OT-3).